The primary structure comprises 134 residues: Small ribosomal subunit protein uS8c (134 aa).

It belongs to the universal ribosomal protein uS8 family. In terms of assembly, part of the 30S ribosomal subunit.

It localises to the plastid. The protein localises to the chloroplast. In terms of biological role, one of the primary rRNA binding proteins, it binds directly to 16S rRNA central domain where it helps coordinate assembly of the platform of the 30S subunit. The protein is Small ribosomal subunit protein uS8c (rps8) of Lotus japonicus (Lotus corniculatus var. japonicus).